A 218-amino-acid chain; its full sequence is N-(5'-phosphoribosyl)anthranilate isomerase (218 aa).

The protein belongs to the TrpF family.

The catalysed reaction is N-(5-phospho-beta-D-ribosyl)anthranilate = 1-(2-carboxyphenylamino)-1-deoxy-D-ribulose 5-phosphate. The protein operates within amino-acid biosynthesis; L-tryptophan biosynthesis; L-tryptophan from chorismate: step 3/5. This Stenotrophomonas maltophilia (strain R551-3) protein is N-(5'-phosphoribosyl)anthranilate isomerase.